The chain runs to 157 residues: SsrA-binding protein (157 aa).

This sequence belongs to the SmpB family.

Its subcellular location is the cytoplasm. Its function is as follows. Required for rescue of stalled ribosomes mediated by trans-translation. Binds to transfer-messenger RNA (tmRNA), required for stable association of tmRNA with ribosomes. tmRNA and SmpB together mimic tRNA shape, replacing the anticodon stem-loop with SmpB. tmRNA is encoded by the ssrA gene; the 2 termini fold to resemble tRNA(Ala) and it encodes a 'tag peptide', a short internal open reading frame. During trans-translation Ala-aminoacylated tmRNA acts like a tRNA, entering the A-site of stalled ribosomes, displacing the stalled mRNA. The ribosome then switches to translate the ORF on the tmRNA; the nascent peptide is terminated with the 'tag peptide' encoded by the tmRNA and targeted for degradation. The ribosome is freed to recommence translation, which seems to be the essential function of trans-translation. In Methylobacterium nodulans (strain LMG 21967 / CNCM I-2342 / ORS 2060), this protein is SsrA-binding protein.